Reading from the N-terminus, the 207-residue chain is Putative threonylcarbamoyl-AMP synthase (207 aa).

One can recognise a YrdC-like domain in the interval E15–I199.

It belongs to the SUA5 family.

It localises to the cytoplasm. It catalyses the reaction L-threonine + hydrogencarbonate + ATP = L-threonylcarbamoyladenylate + diphosphate + H2O. Functionally, required for the formation of a threonylcarbamoyl group on adenosine at position 37 (t(6)A37) in tRNAs that read codons beginning with adenine. Catalyzes the conversion of L-threonine, HCO(3)(-)/CO(2) and ATP to give threonylcarbamoyl-AMP (TC-AMP) as the acyladenylate intermediate, with the release of diphosphate. The chain is Putative threonylcarbamoyl-AMP synthase from Methanocaldococcus jannaschii (strain ATCC 43067 / DSM 2661 / JAL-1 / JCM 10045 / NBRC 100440) (Methanococcus jannaschii).